A 397-amino-acid chain; its full sequence is Arginine biosynthesis bifunctional protein ArgJ (397 aa).

The substrate site is built by Thr-147, Lys-173, Thr-184, Glu-270, Asn-392, and Thr-397. Thr-184 serves as the catalytic Nucleophile.

The protein belongs to the ArgJ family. As to quaternary structure, heterotetramer of two alpha and two beta chains.

The protein localises to the cytoplasm. The catalysed reaction is N(2)-acetyl-L-ornithine + L-glutamate = N-acetyl-L-glutamate + L-ornithine. The enzyme catalyses L-glutamate + acetyl-CoA = N-acetyl-L-glutamate + CoA + H(+). Its pathway is amino-acid biosynthesis; L-arginine biosynthesis; L-ornithine and N-acetyl-L-glutamate from L-glutamate and N(2)-acetyl-L-ornithine (cyclic): step 1/1. It participates in amino-acid biosynthesis; L-arginine biosynthesis; N(2)-acetyl-L-ornithine from L-glutamate: step 1/4. Its function is as follows. Catalyzes two activities which are involved in the cyclic version of arginine biosynthesis: the synthesis of N-acetylglutamate from glutamate and acetyl-CoA as the acetyl donor, and of ornithine by transacetylation between N(2)-acetylornithine and glutamate. This is Arginine biosynthesis bifunctional protein ArgJ from Staphylococcus epidermidis (strain ATCC 35984 / DSM 28319 / BCRC 17069 / CCUG 31568 / BM 3577 / RP62A).